The chain runs to 363 residues: MTVSYGAPGRVNLIGEHTDYNLGFALPIALPRRTVVTFTPEHTGAITARSDRADGSARIPLDTTPGQVTGWAAYAAGAIWALRGAGHPVPGGAMSITSDVEIGSGLSSSAALIGAVLGAVGAATGTRIDRLERARLAQRAENDYVGAPTGLLDHLAALFGAPKTALLIDFRDITVRPVAFDPDACDVVLLLMDSRARHCHAGGEYALRRASCERAAADLGVSSLRAVQDRGLAALGAIADPIDARRARHVLTENQRVLDFAAALADSDFTAAGQLLTASHESMREDFAITTERIDLIAESAVRAGALGARMTGGGFGGAVIALVPADRARDVADTVRRAAVTAGYDEPAVSRTYAAPGAAECR.

16–19 lines the substrate pocket; it reads EHTD. ATP contacts are provided by residues S50 and 103-109; that span reads GSGLSSS. Residues S109 and E141 each contribute to the Mg(2+) site. D153 acts as the Proton acceptor in catalysis. Y205 contributes to the substrate binding site.

This sequence belongs to the GHMP kinase family. GalK subfamily.

The protein resides in the cytoplasm. It carries out the reaction alpha-D-galactose + ATP = alpha-D-galactose 1-phosphate + ADP + H(+). It participates in carbohydrate metabolism; galactose metabolism. In terms of biological role, catalyzes the transfer of the gamma-phosphate of ATP to D-galactose to form alpha-D-galactose-1-phosphate (Gal-1-P). The chain is Galactokinase from Mycobacterium tuberculosis (strain ATCC 25177 / H37Ra).